Consider the following 341-residue polypeptide: Methionine import ATP-binding protein MetN 2 (341 aa).

Residues 2 to 241 (IELKEVVKEY…PQHTVTKRFV (240 aa)) enclose the ABC transporter domain. ATP is bound at residue 38–45 (GFSGAGKS).

Belongs to the ABC transporter superfamily. Methionine importer (TC 3.A.1.24) family. In terms of assembly, the complex is composed of two ATP-binding proteins (MetN), two transmembrane proteins (MetI) and a solute-binding protein (MetQ).

It is found in the cell membrane. It carries out the reaction L-methionine(out) + ATP + H2O = L-methionine(in) + ADP + phosphate + H(+). The enzyme catalyses D-methionine(out) + ATP + H2O = D-methionine(in) + ADP + phosphate + H(+). Its function is as follows. Part of the ABC transporter complex MetNIQ involved in methionine import. Responsible for energy coupling to the transport system. The polypeptide is Methionine import ATP-binding protein MetN 2 (Staphylococcus aureus (strain USA300)).